Here is a 225-residue protein sequence, read N- to C-terminus: Doublesex- and mab-3-related transcription factor C1 (225 aa).

Residues 1–12 (MQRPSGSREVRK) are compositionally biased toward basic and acidic residues. Disordered stretches follow at residues 1–49 (MQRP…SHVH) and 179–216 (QTRH…LPSG). A compositionally biased stretch (basic residues) spans 27–37 (RVKKHVVRRQK).

The protein belongs to the DMRT family.

This chain is Doublesex- and mab-3-related transcription factor C1 (Dmrtc1), found in Rattus norvegicus (Rat).